Reading from the N-terminus, the 811-residue chain is Ribosome biogenesis protein ERB1 (811 aa).

Positions 1 to 11 (MARNSKATDTP) are enriched in polar residues. The segment at 1–138 (MARNSKATDT…VHTKFSDGRP (138 aa)) is disordered. Positions 27–96 (EDAEESSSDE…LSDVDSEEFS (70 aa)) are enriched in acidic residues. Positions 104 to 121 (ASITDKLSGTKIRSYSNA) are enriched in polar residues. The span at 128–138 (EVHTKFSDGRP) shows a compositional bias: basic and acidic residues. Residues 270-386 (RFVPSKHEAK…LRKVPGYQEG (117 aa)) are required for interaction with NOP7. The segment at 386–422 (GLRERFERCLDLYLAPRTRHNKLNIDPDSLIPELPSP) is required for interaction with YTM1. WD repeat units follow at residues 438-477 (GHTEKIRTLSISPDGLWLATGSDDGSVRIWEILTGRQVYK) and 485-525 (NTDD…FDIE). Residues 547-566 (TKNSNIKVNSDDEDEEVEKA) are disordered. WD repeat units lie at residues 595 to 637 (QCRK…SQSP), 640 to 678 (KSKGIIMDAKFHPFKPQLFVASQRYIRIYDLAQQVLVKK), 681 to 720 (PGARWLSNIDIHPRGDNLLASSYDKRVLWHDLDLSSTPYK), 724 to 764 (YHDK…DLMT), and 780 to 811 (INSLGVLDLVWHPKEAWLFSAGADGTARLWTT).

Belongs to the WD repeat BOP1/ERB1 family. As to quaternary structure, component of the NOP7 complex, composed of ERB1, NOP7 and YTM1. The complex is held together by ERB1, which interacts with NOP7 via its N-terminal domain and with YTM1 via a high-affinity interaction between the seven-bladed beta-propeller domains of the 2 proteins. The NOP7 complex associates with the 66S pre-ribosome.

The protein localises to the nucleus. It localises to the nucleolus. Its subcellular location is the nucleoplasm. Component of the NOP7 complex, which is required for maturation of the 25S and 5.8S ribosomal RNAs and formation of the 60S ribosome. This is Ribosome biogenesis protein ERB1 from Debaryomyces hansenii (strain ATCC 36239 / CBS 767 / BCRC 21394 / JCM 1990 / NBRC 0083 / IGC 2968) (Yeast).